Consider the following 444-residue polypeptide: Ribosome biogenesis protein YTM1 (444 aa).

Residues 8–89 (VKLRFFTREE…ETFLNVEYTR (82 aa)) form a ubiquitin-like (UBL) domain region. 7 WD repeats span residues 99-138 (SFDN…EKQY), 140-178 (GHSG…LKSI), 194-231 (GHKA…MTVI), 269-309 (SHSA…CVDT), 311-350 (TTSY…SSKI), 357-397 (GHKN…AMYT), and 408-444 (GVND…IFSN). A sufficient for interaction with ERB1 and association with 66S pre-ribosomes region spans residues 99–444 (SFDNEDWVSS…INKGDNIFSN (346 aa)).

This sequence belongs to the WD repeat WDR12/YTM1 family. In terms of assembly, component of the NOP7 complex, composed of ERB1, NOP7 and YTM1. The complex is held together by ERB1, which interacts with NOP7 via its N-terminal domain and with YTM1 via a high-affinity interaction between the seven-bladed beta-propeller domains of the 2 proteins. The NOP7 complex associates with the 66S pre-ribosome. Interacts (via UBL domain) with MDN1 (via VWFA/MIDAS domain).

The protein resides in the nucleus. It is found in the nucleolus. The protein localises to the nucleoplasm. In terms of biological role, component of the NOP7 complex, which is required for maturation of the 25S and 5.8S ribosomal RNAs and formation of the 60S ribosome. The chain is Ribosome biogenesis protein YTM1 from Kluyveromyces lactis (strain ATCC 8585 / CBS 2359 / DSM 70799 / NBRC 1267 / NRRL Y-1140 / WM37) (Yeast).